The primary structure comprises 446 residues: BAG family molecular chaperone regulator 7 (446 aa).

Residues 230–252 form a disordered region; sequence TGGEKKKKHEEKEKKEKIETKSK. A compositionally biased stretch (basic and acidic residues) spans 239 to 250; the sequence is EEKEKKEKIETK. The IQ domain occupies 303 to 332; the sequence is PEYAAVMIQRAFKAYLIRRSKSLRALRDLA. The 78-residue stretch at 330-407 folds into the BAG domain; it reads DLAIAKTKLK…AMLDVVDPQP (78 aa). Thr-443 is modified (phosphothreonine).

As to quaternary structure, binds to the ATPase domain of HSP70/HSC70 chaperones. Interacts with HSP70-11/BIP2.

It is found in the endoplasmic reticulum. Its function is as follows. Co-chaperone that regulates diverse cellular pathways, such as programmed cell death and stress responses. Necessary for the proper maintenance of the unfolded protein response (UPR) during heat and cold tolerance. The sequence is that of BAG family molecular chaperone regulator 7 (BAG7) from Arabidopsis thaliana (Mouse-ear cress).